The following is a 149-amino-acid chain: Chromophore lyase CpcS/CpeS homolog (149 aa).

Belongs to the CpcS/CpeS biliprotein lyase family.

It localises to the plastid. It is found in the chloroplast. Functionally, might function to covalently attach a chromophore to Cys residue(s) of phycobiliproteins. In Porphyra purpurea (Red seaweed), this protein is Chromophore lyase CpcS/CpeS homolog.